We begin with the raw amino-acid sequence, 163 residues long: UPF0262 protein RPB_4349 (163 aa).

Belongs to the UPF0262 family.

The protein is UPF0262 protein RPB_4349 of Rhodopseudomonas palustris (strain HaA2).